A 150-amino-acid chain; its full sequence is Large ribosomal subunit protein bL9 (150 aa).

The protein belongs to the bacterial ribosomal protein bL9 family.

Binds to the 23S rRNA. This is Large ribosomal subunit protein bL9 from Erwinia tasmaniensis (strain DSM 17950 / CFBP 7177 / CIP 109463 / NCPPB 4357 / Et1/99).